The primary structure comprises 37 residues: MKVRASVKKICRNCKIVKRSGVVRVICVEPKHKQRQG.

This sequence belongs to the bacterial ribosomal protein bL36 family.

The polypeptide is Large ribosomal subunit protein bL36 (Shewanella baltica (strain OS223)).